Here is a 199-residue protein sequence, read N- to C-terminus: Fe/S biogenesis protein NfuA (199 aa).

Residues Cys-151 and Cys-154 each contribute to the [4Fe-4S] cluster site.

This sequence belongs to the NfuA family. In terms of assembly, homodimer. The cofactor is [4Fe-4S] cluster.

Its function is as follows. Involved in iron-sulfur cluster biogenesis. Binds a 4Fe-4S cluster, can transfer this cluster to apoproteins, and thereby intervenes in the maturation of Fe/S proteins. Could also act as a scaffold/chaperone for damaged Fe/S proteins. The polypeptide is Fe/S biogenesis protein NfuA (Xanthomonas campestris pv. campestris (strain 8004)).